A 52-amino-acid polypeptide reads, in one-letter code: Large ribosomal subunit protein bL32c (52 aa).

It belongs to the bacterial ribosomal protein bL32 family.

The protein localises to the plastid. It localises to the chloroplast. This is Large ribosomal subunit protein bL32c from Lobularia maritima (Sweet alyssum).